A 431-amino-acid polypeptide reads, in one-letter code: Teosinte glume architecture 1 (431 aa).

Disordered stretches follow at residues 18-55 (QDHA…GAPA) and 68-102 (ECEP…QQCP). A compositionally biased stretch (low complexity) spans 21–41 (AAAAPSSGGHAANAAAAGTGT). The segment at 101–178 (CPSCAVDGCR…DGHNRRRRKP (78 aa)) adopts an SBP-type zinc-finger fold. Zn(2+) contacts are provided by Cys-104, Cys-109, Cys-126, His-129, Cys-145, Cys-148, His-152, and Cys-164. Over residues 408–419 (GGGSGGGEGSSD) the composition is skewed to gly residues. The interval 408 to 431 (GGGSGGGEGSSDGGTSSSMPFSWQ) is disordered.

Monomer and homodimer. As to expression, strongly expressed in immature ears and weakly in husks. Found in the inflorescence meristem of the developing ear, in the spikelet pair primordia, the glume primordia, the cupule forming region and other floral organs. Not detected in other tissues.

SBP transcriptional regulator probably involved in the domestication of maize. Acts as a transcriptional repressor binding to a 5'-GTAC-3' motif. May repress the growth of lateral branches in length and numbers. The sequence is that of Teosinte glume architecture 1 from Zea mays (Maize).